Consider the following 1164-residue polypeptide: DNA-directed RNA polymerase subunit beta' (1164 aa).

Zn(2+) is bound by residues Cys-60, Cys-62, Cys-75, and Cys-78. Residues Asp-449, Asp-451, and Asp-453 each contribute to the Mg(2+) site. Cys-776, Cys-850, Cys-857, and Cys-860 together coordinate Zn(2+).

It belongs to the RNA polymerase beta' chain family. As to quaternary structure, the RNAP catalytic core consists of 2 alpha, 1 beta, 1 beta' and 1 omega subunit. When a sigma factor is associated with the core the holoenzyme is formed, which can initiate transcription. Mg(2+) is required as a cofactor. The cofactor is Zn(2+).

It carries out the reaction RNA(n) + a ribonucleoside 5'-triphosphate = RNA(n+1) + diphosphate. Its function is as follows. DNA-dependent RNA polymerase catalyzes the transcription of DNA into RNA using the four ribonucleoside triphosphates as substrates. This Moorella thermoacetica (strain ATCC 39073 / JCM 9320) protein is DNA-directed RNA polymerase subunit beta'.